The primary structure comprises 401 residues: Riboflavin biosynthesis protein RibBA (401 aa).

The interval 1–203 (MTDFQFSKVE…IQQLQEYRRK (203 aa)) is DHBP synthase. D-ribulose 5-phosphate is bound by residues 30-31 (RE), D35, 142-146 (RNGHT), and E166. E31 contacts Mg(2+). H145 contacts Mg(2+). The interval 204–401 (HDSLVKQISV…QIKMGHMFNF (198 aa)) is GTP cyclohydrolase II. Residue 254-258 (RIHSE) participates in GTP binding. Residues C259, C270, and C272 each contribute to the Zn(2+) site. Residues Q275, 297-299 (EGR), and T319 each bind GTP. D331 functions as the Proton acceptor; for GTP cyclohydrolase activity in the catalytic mechanism. The active-site Nucleophile; for GTP cyclohydrolase activity is the R333. The GTP site is built by T354 and K359.

The protein in the N-terminal section; belongs to the DHBP synthase family. This sequence in the C-terminal section; belongs to the GTP cyclohydrolase II family. The cofactor is Mg(2+). Mn(2+) serves as cofactor. Zn(2+) is required as a cofactor.

It catalyses the reaction D-ribulose 5-phosphate = (2S)-2-hydroxy-3-oxobutyl phosphate + formate + H(+). The catalysed reaction is GTP + 4 H2O = 2,5-diamino-6-hydroxy-4-(5-phosphoribosylamino)-pyrimidine + formate + 2 phosphate + 3 H(+). It participates in cofactor biosynthesis; riboflavin biosynthesis; 2-hydroxy-3-oxobutyl phosphate from D-ribulose 5-phosphate: step 1/1. Its pathway is cofactor biosynthesis; riboflavin biosynthesis; 5-amino-6-(D-ribitylamino)uracil from GTP: step 1/4. Functionally, catalyzes the conversion of D-ribulose 5-phosphate to formate and 3,4-dihydroxy-2-butanone 4-phosphate. Catalyzes the conversion of GTP to 2,5-diamino-6-ribosylamino-4(3H)-pyrimidinone 5'-phosphate (DARP), formate and pyrophosphate. The polypeptide is Riboflavin biosynthesis protein RibBA (Actinobacillus pleuropneumoniae serotype 5b (strain L20)).